Consider the following 40-residue polypeptide: Photosystem II reaction center protein J (40 aa).

The chain crosses the membrane as a helical span at residues 8–28; that stretch reads IPLWLIGTVTGIPVIGLVGVF.

The protein belongs to the PsbJ family. In terms of assembly, PSII is composed of 1 copy each of membrane proteins PsbA, PsbB, PsbC, PsbD, PsbE, PsbF, PsbH, PsbI, PsbJ, PsbK, PsbL, PsbM, PsbT, PsbX, PsbY, PsbZ, Psb30/Ycf12, at least 3 peripheral proteins of the oxygen-evolving complex and a large number of cofactors. It forms dimeric complexes.

The protein resides in the plastid. The protein localises to the chloroplast thylakoid membrane. One of the components of the core complex of photosystem II (PSII). PSII is a light-driven water:plastoquinone oxidoreductase that uses light energy to abstract electrons from H(2)O, generating O(2) and a proton gradient subsequently used for ATP formation. It consists of a core antenna complex that captures photons, and an electron transfer chain that converts photonic excitation into a charge separation. The chain is Photosystem II reaction center protein J from Lolium perenne (Perennial ryegrass).